The chain runs to 219 residues: UPF0502 protein HCH_06091 (219 aa).

The protein belongs to the UPF0502 family.

This is UPF0502 protein HCH_06091 from Hahella chejuensis (strain KCTC 2396).